Reading from the N-terminus, the 234-residue chain is 2,3-bisphosphoglycerate-dependent phosphoglycerate mutase (234 aa).

Residues 8–15 (RHGESVWN), 21–22 (TG), arginine 60, 87–90 (ERHY), lysine 98, 114–115 (RR), and 183–184 (GN) contribute to the substrate site. Residue histidine 9 is the Tele-phosphohistidine intermediate of the active site. The active-site Proton donor/acceptor is glutamate 87.

The protein belongs to the phosphoglycerate mutase family. BPG-dependent PGAM subfamily. Homodimer.

The catalysed reaction is (2R)-2-phosphoglycerate = (2R)-3-phosphoglycerate. It participates in carbohydrate degradation; glycolysis; pyruvate from D-glyceraldehyde 3-phosphate: step 3/5. Its function is as follows. Catalyzes the interconversion of 2-phosphoglycerate and 3-phosphoglycerate. This Citrifermentans bemidjiense (strain ATCC BAA-1014 / DSM 16622 / JCM 12645 / Bem) (Geobacter bemidjiensis) protein is 2,3-bisphosphoglycerate-dependent phosphoglycerate mutase.